We begin with the raw amino-acid sequence, 472 residues long: Guanine nucleotide-binding protein alpha-1 subunit (472 aa).

Gly-2 is lipidated: N-myristoyl glycine. Cys-3 is lipidated: S-palmitoyl cysteine. The G-alpha domain occupies Asn-40–Ile-472. The G1 motif stretch occupies residues Lys-43 to Thr-56. GTP contacts are provided by Glu-51, Ser-52, Gly-53, Lys-54, Ser-55, and Thr-56. Ser-55 provides a ligand contact to Mg(2+). Residues Leu-127 to Asn-235 are insert; not present in other G-proteins. The segment at Gly-162–Ser-199 is disordered. Lys-165 participates in a covalent cross-link: Glycyl lysine isopeptide (Lys-Gly) (interchain with G-Cter in ubiquitin). The tract at residues Asp-292–Thr-300 is G2 motif. Residues Leu-294, Thr-300, Gly-322, Asn-388, Lys-389, Asp-391, and Ala-444 each contribute to the GTP site. Thr-300 provides a ligand contact to Mg(2+). The interval Phe-315–Arg-324 is G3 motif. The tract at residues Ile-384–Asp-391 is G4 motif. Positions Thr-442–Thr-447 are G5 motif.

It belongs to the G-alpha family. G(q) subfamily. G proteins are composed of 3 units; alpha, beta and gamma. The alpha chain contains the guanine nucleotide binding site. In its GDP-bound form, binds to the G protein beta-gamma dimer STE4-STE18. Directly interacts with the beta subunit STE4. Probably forms preactivation complexes with unligated receptors STE2 and STE3. Interacts with FUS3. Pheromone-induced activation of GPA1 increases its association with FUS3. Interacts with SCP160. SCP160 binds specifically to the GTP-bound form of GPA1. Interacts with the phosphatidylinositol 3-kinase (PI3K) subunits VPS15 and VPS34 at the endosome. The GTP-bound form of GPA1 binds directly and selectively to the catalytic subunit VPS34, while the GDP-bound form binds to VPS15, which appears to function as an alternative G protein beta subunit for GPA1. Interacts with regulators of G protein signaling (RGS) proteins MDM1, RAX1, RGS2 and SST2, but SST2 alone binds preferentially to the transition state conformation of GPA1, indicating that it acts as a GAP for this G protein. Mg(2+) serves as cofactor. N-myristoylation by NMT1 is pheromone-stimulated and required for palmitoylation of Cys-3. This lipid modification anchors the protein to membranes. Depalmitoylated by YLR118C/APT1. In terms of processing, monoubiquitination targets the protein for degradation to the vacuole, and polyubiquitination tags the protein for degradation by the proteasome. This may be an additional signaling regulation mechanism.

It is found in the cell membrane. The protein resides in the endosome membrane. With respect to regulation, alternates between an inactive form bound to GDP and an active form bound to GTP. Activated by the G protein coupled receptors (GPCRs) STE2 and STE3, which serve as guanine nucleotide-exchange factors (GEFs), and inactivated by SST2, probably acting as a GTPase-activating protein (GAP). Its function is as follows. Alpha subunit of the heterotrimeric guanine nucleotide-binding protein (G protein) that mediates mating pheromone signal transduction. Binding of alpha-factor or a-factor to its cognate transmembrane receptor STE2 and STE3, respectively, allows the receptor to serve as a guanine nucleotide exchange factor (GEF) on GPA1. The exchange of GDP for GTP on the G protein alpha subunit alters its interaction with the G protein beta subunit STE4, leading to dissociation of the G protein beta-gamma dimer STE4-STE18. The dissociated subunits activate downstream effectors to activate the mating response pathway and induce changes necessary to produce mating-competent cells. STE4-STE18 activate the downstream pheromone signaling MAP kinase cascade leading to expression of mating-specific genes, inducing cell cycle arrest in G1, promoting polarized cell growth to form mating projections (shmoos), and establishing the changes in plasma membrane, cell wall and nuclear envelope to permit cell-cell fusion (plasmogamy) and fusion of the two haploid nuclei (karyogamy). GPA1 transmits a signal that requires direct binding to the effector enzyme PI3K located at the endosome, promoting increased PI3 production. The intrinsic GTPase activity of GPA1 determines the duration of signaling, and is dramatically accelerated by the RGS protein SST2. In unstimulated cells, GDP-bound GPA1 sequesters the G protein beta-gamma subunit STE4-STE18, preventing it from activating the downstream effectors. Also down-regulates the signal by inhibiting the pheromone-induced accumulation of FUS3 in the nucleus. The polypeptide is Guanine nucleotide-binding protein alpha-1 subunit (GPA1) (Saccharomyces cerevisiae (strain ATCC 204508 / S288c) (Baker's yeast)).